The following is a 162-amino-acid chain: RxLR effector protein PITG_06094 (162 aa).

Residues 1–20 (MRLSFILAATLTGLLACATA) form the signal peptide. The RxLR-dEER signature appears at 51–91 (RFLRAYNDAEDDSEDPKNVKNTVDAKPADESEDSELSEEER). A disordered region spans residues 56–88 (YNDAEDDSEDPKNVKNTVDAKPADESEDSELSE).

This sequence belongs to the RxLR effector family.

It localises to the secreted. Its subcellular location is the host cytoplasm. It is found in the host nucleus. The protein localises to the host nucleolus. In terms of biological role, effector that enhances P.infestans colonization of Nicotiana benthamiana leaves. This is RxLR effector protein PITG_06094 from Phytophthora infestans (strain T30-4) (Potato late blight agent).